A 134-amino-acid chain; its full sequence is C-C motif chemokine 21 (134 aa).

The first 23 residues, 1–23 (MAQSLALSLLILVLAFGIPRTQG), serve as a signal peptide directing secretion. 3 cysteine pairs are disulfide-bonded: Cys31–Cys57, Cys32–Cys75, and Cys103–Cys122. The disordered stretch occupies residues 88 to 134 (QHLDKTPSPQKPAQGCRKDRGASKTGKKGKGSKGCKRTERSQTPKGP). A C-terminal basic extension region spans residues 98-134 (KPAQGCRKDRGASKTGKKGKGSKGCKRTERSQTPKGP). The segment covering 112-122 (TGKKGKGSKGC) has biased composition (basic residues). The segment covering 123–134 (KRTERSQTPKGP) has biased composition (basic and acidic residues).

The protein belongs to the intercrine beta (chemokine CC) family. Monomer. Binds to CCR7. Interacts with PDPN; relocalizes PDPN to the basolateral membrane. Interacts with TNFAIP6 (via Link domain). Interacts with GPR174. As to expression, highly expressed in high endothelial venules of lymph nodes, spleen and appendix. Intermediate levels found in small intestine, thyroid gland and trachea. Low level expression in thymus, bone marrow, liver, and pancreas. Also found in tonsil, fetal heart and fetal spleen.

The protein localises to the secreted. In terms of biological role, inhibits hemopoiesis and stimulates chemotaxis. Chemotactic in vitro for thymocytes and activated T-cells, but not for B-cells, macrophages, or neutrophils. Shows preferential activity towards naive T-cells. May play a role in mediating homing of lymphocytes to secondary lymphoid organs. Binds to atypical chemokine receptor ACKR4 and mediates the recruitment of beta-arrestin (ARRB1/2) to ACKR4. The protein is C-C motif chemokine 21 (CCL21) of Homo sapiens (Human).